The chain runs to 253 residues: Ciliary microtubule associated protein 1B (253 aa).

One copy of the STPGR repeat lies at 182 to 207; the sequence is PGPCAYQVVSPGVYKSRAPQFTILAR.

Belongs to the CIMAP family.

It localises to the cell projection. The protein localises to the cilium. Its subcellular location is the flagellum. The protein is Ciliary microtubule associated protein 1B of Homo sapiens (Human).